We begin with the raw amino-acid sequence, 283 residues long: Circadian clock oscillator protein KaiA (283 aa).

Residues 1–146 (MAQSTALTIC…LFRLPALKES (146 aa)) are psR domain, not required to form KaiA:KaiB:KaiC complex, or for a full KaiC phosphorylation cycle. The KaiA N-terminal domain occupies 3–163 (QSTALTICGL…RLSQKLKERL (161 aa)). The interval 164–172 (GYLGVYYKR) is flexible linker. A KaiA C-terminal domain is found at 173–281 (DTAFFFRRMS…CEMYRRSIPR (109 aa)).

This sequence belongs to the KaiA family. In terms of assembly, homodimer. The KaiABC complex composition changes during the circadian cycle to control KaiC phosphorylation. Complexes KaiC(6), KaiA(2-4):KaiC(6), KaiB(6):KaiC(6) and KaiC(6):KaiB(6):KaiA(12) are among the most important forms, many form cooperatively. Binds to KaiB and KaiC, the N-terminus (pseudoreceiver domain PsR) is not required for either interaction. 1 KaiB binds to one subunit of the KaiA homodimer. KaiA and CikA bind to the same region of the KaiB(fs) form and therefore compete.

In terms of biological role, key component of the KaiABC oscillator complex, which constitutes the main circadian regulator in cyanobacteria. Complex composition changes during the circadian cycle to control KaiC phosphorylation. KaiA stimulates KaiC autophosphorylation, while KaiB sequesters KaiA, leading to KaiC autodephosphorylation. KaiA binding to the KaiC CII domain during the subjective day yields KaiA(2-4):KaiC(6) complexes which stimulate KaiC autophosphorylation. Phospho-Ser-431 KaiC accumulation triggers binding of KaiB during the subjective night to form the KaiB(6):KaiC(6) complex, leading to changes in the output regulators CikA and SasA. KaiB(6):KaiC(6) formation exposes a site for KaiA binding on KaiB that sequesters KaiA from KaiC's CII domain, making the KaiC(6):KaiB(6):KaiA(12) complex resulting in KaiC autodephosphorylation. Complete dephosphorylation of KaiC leads to dissociation of KaiA(2):KaiB(1), completing 1 cycle of the Kai oscillator. Formation of the KaiB:KaiC complex is promoted by KaiA, helping switch KaiC from its autophosphorylation to autodephosphatase function. Functionally, binds oxidized quinones via the N-terminal PsR domain, allowing it to sense redox changes and possibly mediate clock input. This is Circadian clock oscillator protein KaiA from Thermosynechococcus vestitus (strain NIES-2133 / IAM M-273 / BP-1).